Consider the following 193-residue polypeptide: uncharacterized protein (193 aa).

Residues 119–143 (LAGSLLAATGMTLGIFGMGITGTCW) form a helical membrane-spanning segment.

The protein resides in the mitochondrion membrane. This is an uncharacterized protein from Saccharomyces cerevisiae (strain ATCC 204508 / S288c) (Baker's yeast).